Here is a 438-residue protein sequence, read N- to C-terminus: V-type ATP synthase beta chain (438 aa).

This sequence belongs to the ATPase alpha/beta chains family.

Functionally, produces ATP from ADP in the presence of a proton gradient across the membrane. The V-type beta chain is a regulatory subunit. In Chlamydia pneumoniae (Chlamydophila pneumoniae), this protein is V-type ATP synthase beta chain (atpB).